Here is a 353-residue protein sequence, read N- to C-terminus: UDP-galactose transporter (353 aa).

Transmembrane regions (helical) follow at residues 147–167, 184–204, 215–235, 254–274, 279–299, and 302–322; these read LGPMKWFSLFLLTGGIAIVQL, VTGFSAVLVACLISGLAGVYF, LWVRNVQLSFFSLFPCLFTIL, IVWLAILLQAGGGIIVALCVA, IMKNFSTSISIIISSLASVYL, and FKISLTFLIGVMLVIAATFLY. A disordered region spans residues 325–353; it reads PESKPSPSRGTYIPMTTQDAAAKDVDHKH. The segment covering 329 to 343 has biased composition (polar residues); it reads PSPSRGTYIPMTTQD.

It belongs to the nucleotide-sugar transporter family. SLC35A subfamily.

It is found in the golgi apparatus membrane. Essential for the transport of UDP-galactose into the lumen of Golgi apparatus. The protein is UDP-galactose transporter (gms1) of Schizosaccharomyces pombe (strain 972 / ATCC 24843) (Fission yeast).